Reading from the N-terminus, the 306-residue chain is Protodermal factor 1 (306 aa).

The N-terminal stretch at 1 to 23 is a signal peptide; the sequence is MRGMVSFAVWALFAALLSQQLFA. The segment covering 40–56 has biased composition (low complexity); that stretch reads PPSGSHGTPPSHTPPSS. The disordered stretch occupies residues 40-156; it reads PPSGSHGTPP…VVTPPSPIVD (117 aa). A compositionally biased stretch (pro residues) spans 62–83; it reads PYDPSPSTPSHPSPPSHTPTPS. The span at 84-99 shows a compositional bias: low complexity; the sequence is TPSHTPTPHTPSHTPT. Positions 139–154 are enriched in pro residues; the sequence is SPPPRTPVVVTPPSPI.

In terms of tissue distribution, confined to the shoot apical meristem (SAM) at the layer L1 in vegetative, infloresence and floral meristems, as well as in protoderm of organ primordia, including during embryogenesis. Also present in the tip of emerging lateral root primordia.

In terms of biological role, may be involved in the regulation of meristem growth. The chain is Protodermal factor 1 (PDF1) from Arabidopsis thaliana (Mouse-ear cress).